A 773-amino-acid chain; its full sequence is MAECRASGGGSGGDSLDKSITLPPDEIFRNLENAKRFAIDIGGSLTKLAYYSTVQHKVAKVRSFDHPGKDAEQDHEPPYEISVQEEITARLHFIKFENTYMEACLDFIRDHLVNTETKVIQATGGGAYKFKDLIEEKLRLKVDKEDVMTCLIKGCNFVLKNIPHEAFMYQKDSDPEFRFQTNHPNIFPYLLVNIGSGVSIVKVETEDRFEWIGGSSIGGGTFWGLGALLTKTKKFDELLQLASRGRHANVDMLVQDIYGGAHQTLGLSGNLIASSFGKSATADREFSKEDMAKSLLHMISNDIGQLACLYAKLHGLDRVYFGGFFIRGHPVTMRTITYSINFFSKGEVQALFLRHEGYLGAIGAFLKGAEQDNPNQYSWGENYAASSGLMSTAPELCPTQRARSGTFDLLEMDRLERPLVNLPLLLDPSSYVPDTVDLTDDALARQYWLTCFEEALDGVVKRAVASQPESVDAAERAEKFRQKYWGKLQTLRHQPFAYGTLTVRSLLDTREHCLNEFNFPDPYSKVKQKENGLALKCFQSVTRSLDSLGWEERQLALVKGLLAGNVFDWGAKAVSDVLESDPQFGFEEAKRKLQERPWLVDSYTKWLQRLKGPPHKCALIFADNSGIDIILGVFPFVRELLCRGIEVILACNSGPALNDVTYSESLIVAERIAAMDPIICTALREDRLLLVQTGSSPPCLDLSRLDKGLAVLVRERGADLVVIEGMGRAVHTNYHALLRCESLKLAVVKNAWLAERLGGQLFSVIFKYEVPAE.

Alanine 2 carries the N-acetylalanine modification. The pantothenate kinase stretch occupies residues 2 to 402 (AECRASGGGS…APELCPTQRA (401 aa)). Acetyl-CoA contacts are provided by serine 196 and serine 199. Tyrosine 320 carries the 3'-nitrotyrosine modification. Residues 403–773 (RSGTFDLLEM…VIFKYEVPAE (371 aa)) are 4'-phosphopantetheine phosphatase. Residue serine 404 is modified to Phosphoserine. Threonine 406 is subject to Phosphothreonine. 3 residues coordinate Mn(2+): aspartate 623, asparagine 624, and aspartate 659. The Subfamily II EGMGR motif motif lies at 724-728 (EGMGR).

In the N-terminal section; belongs to the type II pantothenate kinase family. The protein in the C-terminal section; belongs to the damage-control phosphatase family. Phosphopantetheine phosphatase (II) subfamily. Homodimer. Interacts with PKM. Requires Mn(2+) as cofactor. It depends on Ni(2+) as a cofactor.

The protein localises to the cytoplasm. The catalysed reaction is (R)-4'-phosphopantetheine + H2O = (R)-pantetheine + phosphate. The enzyme catalyses (R)-4'-phosphopantetheine sulfonate + H2O = (R)-pantetheine sulfonate + phosphate. It catalyses the reaction (R)-4'-phospho-S-sulfopantetheine + H2O = (R)-S-sulfopantetheine + phosphate. Its activity is regulated as follows. Activity is strongly promoted by Co(2+), Ni(2+), Mg(2+) and Mn(2+). Activity is inhibited by EDTA. Its function is as follows. Phosphatase which shows a preference for 4'-phosphopantetheine and its oxidatively damaged forms (sulfonate or S-sulfonate), providing strong indirect evidence that the phosphatase activity pre-empts damage in the coenzyme A (CoA) pathway. Hydrolyzing excess 4'-phosphopantetheine could constitute a directed overflow mechanism to prevent its oxidation to the S-sulfonate, sulfonate, or other forms. Hydrolyzing 4'-phosphopantetheine sulfonate or S-sulfonate would forestall their conversion to inactive forms of CoA and acyl carrier protein. May play a role in the physiological regulation of CoA intracellular levels. In Rattus norvegicus (Rat), this protein is 4'-phosphopantetheine phosphatase.